A 115-amino-acid chain; its full sequence is Nitrogen regulatory protein P-II 1 (115 aa).

Y54 carries the O-UMP-tyrosine modification.

This sequence belongs to the P(II) protein family.

Its function is as follows. Could be involved in the regulation of nitrogen fixation. The chain is Nitrogen regulatory protein P-II 1 from Methanothermobacter thermautotrophicus (strain ATCC 29096 / DSM 1053 / JCM 10044 / NBRC 100330 / Delta H) (Methanobacterium thermoautotrophicum).